The following is a 918-amino-acid chain: Hexokinase-1 (918 aa).

Position 1 is an N-acetylmethionine (methionine 1). A mitochondrial-binding peptide (MBP) region spans residues 1 to 10 (MIAAQLLAYY). 2 Hexokinase domains span residues 16–458 (DDQV…MVTA) and 464–906 (AEQH…LITA). Residues arginine 30 and 84–89 (DLGGSS) contribute to the ATP site. The interval 73–207 (DGSEKGDFIA…DYDANIVAVV (135 aa)) is hexokinase small subdomain 1. 84 to 91 (DLGGSSFR) contributes to the D-glucose 6-phosphate binding site. D-glucose-binding positions include serine 155, 172–173 (TK), and 208–209 (ND). Residues 208–447 (NDTVGTMIDC…SDVRFLLSES (240 aa)) form a hexokinase large subdomain 1 region. Residues aspartate 209 and threonine 232 each contribute to the D-glucose 6-phosphate site. D-glucose contacts are provided by residues asparagine 235, glutamate 260, and 291–294 (QRFE). At serine 337 the chain carries Phosphoserine. D-glucose 6-phosphate is bound at residue 413 to 415 (DGS). ATP-binding positions include 425–426 (RR) and 532–537 (DLGGTN). The hexokinase small subdomain 2 stretch occupies residues 521 to 655 (DGTEDGDFLA…EFDLDVVAVV (135 aa)). 532–536 (DLGGT) contacts D-glucose 6-phosphate. D-glucose-binding positions include 603-604 (SF), 620-621 (TK), and 656-657 (ND). The segment at 656–895 (NDTVGTMMTC…CNVSFLLSED (240 aa)) is hexokinase large subdomain 2. D-glucose 6-phosphate-binding residues include aspartate 657 and threonine 680. ATP is bound at residue threonine 680. Residues 682–683 (SN), glutamate 708, and glutamate 742 each bind D-glucose. ATP contacts are provided by residues 747 to 748 (GI), 784 to 788 (TKFLS), and 863 to 867 (TLYKL). D-glucose 6-phosphate contacts are provided by residues 861 to 863 (DGT) and serine 897.

Belongs to the hexokinase family. As to quaternary structure, monomer. Interacts with RABL2/RABL2A; binds preferentially to GTP-bound RABL2. Interacts with VDAC1. The HK1-VDAC1 complex interacts with ATF2. Interacts (via N-terminal spermatogenic cell-specific region) with PFKM (via C-terminus). Interacts with SMAD5.

Its subcellular location is the mitochondrion outer membrane. It is found in the cytoplasm. The protein localises to the cytosol. It catalyses the reaction a D-hexose + ATP = a D-hexose 6-phosphate + ADP + H(+). It carries out the reaction D-fructose + ATP = D-fructose 6-phosphate + ADP + H(+). The enzyme catalyses D-glucose + ATP = D-glucose 6-phosphate + ADP + H(+). The catalysed reaction is D-mannose + ATP = D-mannose 6-phosphate + ADP + H(+). It catalyses the reaction D-glucosamine + ATP = D-glucosamine 6-phosphate + ADP + H(+). The protein operates within carbohydrate metabolism; hexose metabolism. Its pathway is carbohydrate degradation; glycolysis; D-glyceraldehyde 3-phosphate and glycerone phosphate from D-glucose: step 1/4. Its activity is regulated as follows. Hexokinase is an allosteric enzyme inhibited by its product D-glucose 6-phosphate. Hexokinase activity is inhibited by N-acetyl-D-glucosamine. In terms of biological role, catalyzes the phosphorylation of various hexoses, such as D-glucose, D-glucosamine, D-fructose, D-mannose and 2-deoxy-D-glucose, to hexose 6-phosphate (D-glucose 6-phosphate, D-glucosamine 6-phosphate, D-fructose 6-phosphate, D-mannose 6-phosphate and 2-deoxy-D-glucose 6-phosphate, respectively). Does not phosphorylate N-acetyl-D-glucosamine. Mediates the initial step of glycolysis by catalyzing phosphorylation of D-glucose to D-glucose 6-phosphate. Involved in innate immunity and inflammation by acting as a pattern recognition receptor for bacterial peptidoglycan. When released in the cytosol, N-acetyl-D-glucosamine component of bacterial peptidoglycan inhibits the hexokinase activity of HK1 and causes its dissociation from mitochondrial outer membrane, thereby activating the NLRP3 inflammasome. In Bos taurus (Bovine), this protein is Hexokinase-1.